A 270-amino-acid chain; its full sequence is Phosphodiesterase YaeI (270 aa).

A divalent metal cation is bound by residues D56, H58, D88, N120, H209, and H211.

The protein belongs to the metallophosphoesterase superfamily. Requires a divalent metal cation as cofactor.

Its function is as follows. Shows phosphodiesterase activity, hydrolyzing phosphodiester bond in the artificial chromogenic substrate bis-p-nitrophenyl phosphate (bis-pNPP). In Escherichia coli (strain K12), this protein is Phosphodiesterase YaeI (yaeI).